A 99-amino-acid chain; its full sequence is Putative membrane protein insertion efficiency factor (99 aa).

This sequence belongs to the UPF0161 family.

It is found in the cell membrane. In terms of biological role, could be involved in insertion of integral membrane proteins into the membrane. In Corynebacterium glutamicum (strain ATCC 13032 / DSM 20300 / JCM 1318 / BCRC 11384 / CCUG 27702 / LMG 3730 / NBRC 12168 / NCIMB 10025 / NRRL B-2784 / 534), this protein is Putative membrane protein insertion efficiency factor.